The sequence spans 114 residues: Translation initiation factor 1A (114 aa).

An S1-like domain is found at 19–91 (SEFRLPGEGE…EKGDIVHKYE (73 aa)).

It belongs to the eIF-1A family.

Functionally, seems to be required for maximal rate of protein biosynthesis. Enhances ribosome dissociation into subunits and stabilizes the binding of the initiator Met-tRNA(I) to 40 S ribosomal subunits. This Pyrobaculum aerophilum (strain ATCC 51768 / DSM 7523 / JCM 9630 / CIP 104966 / NBRC 100827 / IM2) protein is Translation initiation factor 1A (eIF1A).